The chain runs to 398 residues: tRNA-specific 2-thiouridylase MnmA (398 aa).

ATP is bound by residues 18-25 (AMSGGVDS) and Leu44. Cys112 (nucleophile) is an active-site residue. Cys112 and Cys213 are disulfide-bonded. Gly136 is a binding site for ATP. The interval 163–165 (RDQ) is interaction with tRNA. The active-site Cysteine persulfide intermediate is the Cys213.

The protein belongs to the MnmA/TRMU family.

The protein resides in the cytoplasm. It catalyses the reaction S-sulfanyl-L-cysteinyl-[protein] + uridine(34) in tRNA + AH2 + ATP = 2-thiouridine(34) in tRNA + L-cysteinyl-[protein] + A + AMP + diphosphate + H(+). Catalyzes the 2-thiolation of uridine at the wobble position (U34) of tRNA, leading to the formation of s(2)U34. In Rhizobium meliloti (strain 1021) (Ensifer meliloti), this protein is tRNA-specific 2-thiouridylase MnmA.